Here is a 782-residue protein sequence, read N- to C-terminus: General transcription and DNA repair factor IIH helicase/translocase subunit XPB (782 aa).

Over residues M1 to K11 the composition is skewed to basic and acidic residues. Disordered stretches follow at residues M1–T51 and S218–K241. The short motif at R6 to H18 is the Nuclear localization signal element. A compositionally biased stretch (acidic residues) spans D21–P30. Residues S218 to T236 show a composition bias toward polar residues. The Helicase ATP-binding domain maps to M327–L488. L340–S347 lines the ATP pocket. A DEVH box motif is present at residues D441–H444. The Helicase C-terminal domain occupies R542–A702. At S686 the chain carries Phosphoserine. S751 is modified (phosphoserine; by CK2).

It belongs to the helicase family. RAD25/XPB subfamily. As to quaternary structure, component of the 7-subunit TFIIH core complex composed of XPB/ERCC3, XPD/ERCC2, GTF2H1, GTF2H2, GTF2H3, GTF2H4 and GTF2H5, which is active in NER. The core complex associates with the 3-subunit CDK-activating kinase (CAK) module composed of CCNH/cyclin H, CDK7 and MNAT1 to form the 10-subunit holoenzyme (holo-TFIIH) active in transcription. Interacts with PUF60. Interacts with ATF7IP. Interacts with KAT2A; leading to KAT2A recruitment to promoters and acetylation of histones. Part of TBP-based Pol II pre-initiation complex (PIC), in which Pol II core assembles with general transcription factors and other specific initiation factors including GTF2E1, GTF2E2, GTF2F1, GTF2F2, TCEA1, ERCC2, ERCC3, GTF2H2, GTF2H3, GTF2H4, GTF2H5, GTF2A1, GTF2A2, GTF2B and TBP; this large multi-subunit PIC complex mediates DNA unwinding and targets Pol II core to the transcription start site where the first phosphodiester bond forms. In terms of processing, phosphorylation on Ser-751 by CK2 controls the 5'-excision activity of ERCC1-XPF endonuclease; phosphorylated protein inhibits the excision activity and thus NER. Dephosphorylation reactivates the 5'-excision step. Phosphorylation has no effect on transcription or the 3'-5' helicase activity.

It is found in the nucleus. It carries out the reaction Couples ATP hydrolysis with the unwinding of duplex DNA by translocating in the 3'-5' direction.. The catalysed reaction is ATP + H2O = ADP + phosphate + H(+). With respect to regulation, phosphorylation on Ser-751 by CK2 controls the 5'-excision activity of ERCC1-XPF endonuclease; phosphorylated protein inhibits the excision activity and thus NER. ATPase activity is stimulated by TFIIH subunit p52 (GTF2H4). DNA translocase activity by this subunit in TFIIH is stimulated by XPA, ERCC5/XPG and XFP plus ERCC1. ATP-dependent 3'-5' DNA helicase/translocase; binds dsDNA rather than ssDNA, unzipping it in a translocase rather than classical helicase activity. Component of the general transcription and DNA repair factor IIH (TFIIH) core complex. When complexed to CDK-activating kinase (CAK), involved in RNA transcription by RNA polymerase II. The ATPase activity of XPB/ERCC3, but not its helicase activity, is required for DNA opening; it may wrap around the damaged DNA wedging it open, causing localized melting and twisting that allows XPD/ERCC2 helicase to anchor. The ATP-dependent helicase activity of XPB/ERCC3 may be required for promoter escape. Also involved in transcription-coupled nucleotide excision repair (NER) of damaged DNA. In NER, TFIIH acts by opening DNA around the lesion to allow the excision of the damaged oligonucleotide and its replacement by a new DNA fragment. The structure of the TFIIH transcription complex differs from the NER-TFIIH complex; large movements by XPD/ERCC2 and XPB/ERCC3 are stabilized by XPA. In Pongo abelii (Sumatran orangutan), this protein is General transcription and DNA repair factor IIH helicase/translocase subunit XPB (ERCC3).